The primary structure comprises 137 residues: Large ribosomal subunit protein uL16c (137 aa).

This sequence belongs to the universal ribosomal protein uL16 family. As to quaternary structure, part of the 50S ribosomal subunit.

The protein resides in the plastid. It is found in the chloroplast. This chain is Large ribosomal subunit protein uL16c, found in Rhodomonas salina (Cryptomonas salina).